The primary structure comprises 532 residues: Glucan synthesis regulatory protein (532 aa).

A disordered region spans residues 374–532; that stretch reads TANKRKSMAP…DAEDMKDIEI (159 aa). Positions 381 to 393 are enriched in low complexity; the sequence is MAPSMASASGMRS. Positions 447–457 are enriched in polar residues; sequence PTTSLTASNAS. A compositionally biased stretch (basic and acidic residues) spans 475–516; sequence SGEHSKEDIKVNEDSPAKERTSEDKEKKPETEANGKATESKG.

The protein belongs to the KNR4/SMI1 family.

Involved in the regulation of 1,3-beta-glucan synthase activity and cell-wall formation. The protein is Glucan synthesis regulatory protein (cot-2) of Neurospora crassa (strain ATCC 24698 / 74-OR23-1A / CBS 708.71 / DSM 1257 / FGSC 987).